The sequence spans 147 residues: Hemoglobin subunit epsilon-4 (147 aa).

Positions 3 to 147 (HFTTEEKAAV…VANALAHKYH (145 aa)) constitute a Globin domain. Residues His64 and His93 each contribute to the heme b site.

This sequence belongs to the globin family. Red blood cells.

Hemoglobin epsilon chain is a beta-type chain found in early embryos. The chain is Hemoglobin subunit epsilon-4 (HBE4) from Bos taurus (Bovine).